The sequence spans 221 residues: Putative N-acetylmannosamine-6-phosphate 2-epimerase (221 aa).

This sequence belongs to the NanE family.

It catalyses the reaction an N-acyl-D-glucosamine 6-phosphate = an N-acyl-D-mannosamine 6-phosphate. It functions in the pathway amino-sugar metabolism; N-acetylneuraminate degradation; D-fructose 6-phosphate from N-acetylneuraminate: step 3/5. Its function is as follows. Converts N-acetylmannosamine-6-phosphate (ManNAc-6-P) to N-acetylglucosamine-6-phosphate (GlcNAc-6-P). This Clostridium perfringens (strain ATCC 13124 / DSM 756 / JCM 1290 / NCIMB 6125 / NCTC 8237 / Type A) protein is Putative N-acetylmannosamine-6-phosphate 2-epimerase.